The sequence spans 133 residues: Ribosome-binding factor A (133 aa).

It belongs to the RbfA family. Monomer. Binds 30S ribosomal subunits, but not 50S ribosomal subunits or 70S ribosomes.

It localises to the cytoplasm. In terms of biological role, one of several proteins that assist in the late maturation steps of the functional core of the 30S ribosomal subunit. Associates with free 30S ribosomal subunits (but not with 30S subunits that are part of 70S ribosomes or polysomes). Required for efficient processing of 16S rRNA. May interact with the 5'-terminal helix region of 16S rRNA. The chain is Ribosome-binding factor A from Salmonella typhimurium (strain LT2 / SGSC1412 / ATCC 700720).